The chain runs to 313 residues: Beta-lactamase (313 aa).

Positions 1–15 are cleaved as a signal peptide; it reads MQRIGVTDYTILGTV. Catalysis depends on Ser190, which acts as the Acyl-ester intermediate.

The protein belongs to the class-C beta-lactamase family.

The enzyme catalyses a beta-lactam + H2O = a substituted beta-amino acid. In terms of biological role, upon expression in E.coli enables the latter to utilize penicillin as a carbon source. The polypeptide is Beta-lactamase (penA) (Burkholderia multivorans (strain ATCC 17616 / 249)).